The sequence spans 131 residues: Small ribosomal subunit protein uS8 (131 aa).

Belongs to the universal ribosomal protein uS8 family. In terms of assembly, part of the 30S ribosomal subunit. Contacts proteins S5 and S12.

Functionally, one of the primary rRNA binding proteins, it binds directly to 16S rRNA central domain where it helps coordinate assembly of the platform of the 30S subunit. The chain is Small ribosomal subunit protein uS8 from Bordetella parapertussis (strain 12822 / ATCC BAA-587 / NCTC 13253).